A 314-amino-acid polypeptide reads, in one-letter code: O-antigen chain rhamnosyltransferase RfbN (314 aa).

This sequence belongs to the glycosyltransferase 2 family.

It catalyses the reaction alpha-D-galactosyl-di-trans,octa-cis-undecaprenyl diphosphate + dTDP-beta-L-rhamnose = alpha-L-rhamnosyl-(1-&gt;3)-alpha-D-galactosyl-1-diphospho-di-trans,octa-cis-undecaprenol + dTDP + H(+). Its pathway is bacterial outer membrane biogenesis; LPS O-antigen biosynthesis. In terms of biological role, rhamnosyltransferase involved in the biosynthesis of the repeat unit of the lipopolysaccharide (LPS) O-antigen region. Catalyzes the addition of a rhamnose to the galactosyl-undecaprenyl diphosphate intermediate. The sequence is that of O-antigen chain rhamnosyltransferase RfbN from Salmonella typhimurium (strain LT2 / SGSC1412 / ATCC 700720).